The chain runs to 476 residues: Proline--tRNA ligase 2 (476 aa).

Belongs to the class-II aminoacyl-tRNA synthetase family. ProS type 3 subfamily. As to quaternary structure, homodimer.

The protein resides in the cytoplasm. The catalysed reaction is tRNA(Pro) + L-proline + ATP = L-prolyl-tRNA(Pro) + AMP + diphosphate. Catalyzes the attachment of proline to tRNA(Pro) in a two-step reaction: proline is first activated by ATP to form Pro-AMP and then transferred to the acceptor end of tRNA(Pro). The sequence is that of Proline--tRNA ligase 2 from Bacillus cereus (strain ZK / E33L).